The following is a 143-amino-acid chain: Large ribosomal subunit protein uL11 (143 aa).

This sequence belongs to the universal ribosomal protein uL11 family. In terms of assembly, part of the ribosomal stalk of the 50S ribosomal subunit. Interacts with L10 and the large rRNA to form the base of the stalk. L10 forms an elongated spine to which L12 dimers bind in a sequential fashion forming a multimeric L10(L12)X complex. In terms of processing, one or more lysine residues are methylated.

In terms of biological role, forms part of the ribosomal stalk which helps the ribosome interact with GTP-bound translation factors. The chain is Large ribosomal subunit protein uL11 from Koribacter versatilis (strain Ellin345).